The chain runs to 498 residues: ATP synthase subunit beta, chloroplastic (498 aa).

172–179 (GGAGVGKT) is an ATP binding site.

It belongs to the ATPase alpha/beta chains family. As to quaternary structure, F-type ATPases have 2 components, CF(1) - the catalytic core - and CF(0) - the membrane proton channel. CF(1) has five subunits: alpha(3), beta(3), gamma(1), delta(1), epsilon(1). CF(0) has four main subunits: a(1), b(1), b'(1) and c(9-12).

The protein localises to the plastid. The protein resides in the chloroplast thylakoid membrane. The enzyme catalyses ATP + H2O + 4 H(+)(in) = ADP + phosphate + 5 H(+)(out). Produces ATP from ADP in the presence of a proton gradient across the membrane. The catalytic sites are hosted primarily by the beta subunits. This Spinacia oleracea (Spinach) protein is ATP synthase subunit beta, chloroplastic.